Consider the following 312-residue polypeptide: Ribosomal protein uL3 glutamine methyltransferase (312 aa).

It belongs to the protein N5-glutamine methyltransferase family. PrmB subfamily.

The enzyme catalyses L-glutaminyl-[ribosomal protein uL3] + S-adenosyl-L-methionine = N(5)-methyl-L-glutaminyl-[ribosomal protein uL3] + S-adenosyl-L-homocysteine + H(+). Functionally, methylates large ribosomal subunit protein uL3 on a specific glutamine residue. The sequence is that of Ribosomal protein uL3 glutamine methyltransferase from Xylella fastidiosa (strain 9a5c).